A 154-amino-acid chain; its full sequence is NADPH-dependent 7-cyano-7-deazaguanine reductase (154 aa).

The active-site Thioimide intermediate is cysteine 52. The Proton donor role is filled by aspartate 59. Substrate is bound by residues 74–76 (VES) and 93–94 (HE).

It belongs to the GTP cyclohydrolase I family. QueF type 1 subfamily.

The protein resides in the cytoplasm. It carries out the reaction 7-aminomethyl-7-carbaguanine + 2 NADP(+) = 7-cyano-7-deazaguanine + 2 NADPH + 3 H(+). Its pathway is tRNA modification; tRNA-queuosine biosynthesis. In terms of biological role, catalyzes the NADPH-dependent reduction of 7-cyano-7-deazaguanine (preQ0) to 7-aminomethyl-7-deazaguanine (preQ1). The polypeptide is NADPH-dependent 7-cyano-7-deazaguanine reductase (Paracoccus denitrificans (strain Pd 1222)).